Consider the following 255-residue polypeptide: Methanethiol S-methyltransferase (255 aa).

A run of 5 helical transmembrane segments spans residues Phe-16–Val-36, Leu-56–Val-76, Tyr-99–Ile-119, Ile-131–Ile-151, and Val-191–Ala-211.

Belongs to the nurim family.

The protein resides in the membrane. It catalyses the reaction methanethiol + S-adenosyl-L-methionine = dimethyl sulfide + S-adenosyl-L-homocysteine + H(+). Functionally, catalyzes the methylation of methanethiol (MeSH) to yield dimethylsulphide (DMS). This Crocosphaera subtropica (strain ATCC 51142 / BH68) (Cyanothece sp. (strain ATCC 51142)) protein is Methanethiol S-methyltransferase.